Reading from the N-terminus, the 451-residue chain is Alpha-galactosidase (451 aa).

5-71 (PKITFIGAGS…ASGKITCHTQ (67 aa)) serves as a coordination point for NAD(+). Asn151 lines the substrate pocket. Cys173 lines the Mn(2+) pocket. His174 serves as the catalytic Proton donor. His203 is a Mn(2+) binding site. A substrate-binding site is contributed by Arg287.

It belongs to the glycosyl hydrolase 4 family. Homodimer. NAD(+) is required as a cofactor. It depends on Mn(2+) as a cofactor.

It catalyses the reaction Hydrolysis of terminal, non-reducing alpha-D-galactose residues in alpha-D-galactosides, including galactose oligosaccharides, galactomannans and galactolipids.. The chain is Alpha-galactosidase (melA) from Escherichia coli (strain K12).